The sequence spans 108 residues: UPF0060 membrane protein Sputw3181_1172 (108 aa).

A run of 4 helical transmembrane segments spans residues 3–23 (VITT…GCYL), 31–51 (GASA…AWLL), 63–83 (AAYG…VDGI), and 87–107 (RWDL…MFAP).

Belongs to the UPF0060 family.

The protein localises to the cell inner membrane. The polypeptide is UPF0060 membrane protein Sputw3181_1172 (Shewanella sp. (strain W3-18-1)).